The primary structure comprises 469 residues: DNA-binding transcriptional regulator NtrC (469 aa).

Positions 5–119 constitute a Response regulatory domain; it reads IVWVVDDDSS…EAVALVERAI (115 aa). Aspartate 54 is modified (4-aspartylphosphate). The Sigma-54 factor interaction domain maps to 140–369; sequence MIGEAPAMQD…LENTCRWLTV (230 aa). Residues 168-175 and 231-240 each bind ATP; these read GESGTGKE and ADGGTLFLDE. The H-T-H motif DNA-binding region spans 445-464; sequence KQEAARLLGWGRNTLTRKLK.

Phosphorylated and dephosphorylated by NtrB.

The protein resides in the cytoplasm. Member of the two-component regulatory system NtrB/NtrC, which controls expression of the nitrogen-regulated (ntr) genes in response to nitrogen limitation. Phosphorylated NtrC binds directly to DNA and stimulates the formation of open promoter-sigma54-RNA polymerase complexes. The sequence is that of DNA-binding transcriptional regulator NtrC (glnG) from Salmonella typhimurium (strain LT2 / SGSC1412 / ATCC 700720).